The sequence spans 408 residues: Protein EcsB (408 aa).

Helical transmembrane passes span 30–50 (HLVI…SKWI), 53–73 (IPAH…VLTS), 111–131 (LFPL…VTPG), 134–154 (LVSY…NQVM), 180–200 (LVLY…YVIM), 284–304 (YLGI…YVSA), 308–328 (IAAV…LPLF), 351–371 (YFSL…VASA), and 374–394 (AGLT…FVVL).

Its subcellular location is the cell membrane. Presumed to form part of an ABC-transporter, it may form a transport channel. In Bacillus subtilis (strain 168), this protein is Protein EcsB (ecsB).